The sequence spans 434 residues: Protein POLLENLESS 3 (434 aa).

The segment at 13–47 (VYYTPPPARTSDHVAAMPMTERRRPPYSCSSSSER) is disordered. Positions 34–37 (RRRP) match the Nuclear localization signal 1 motif. TPR repeat units follow at residues 95–131 (DSAL…ESQD), 133–164 (IDNL…LEQG), 191–224 (ARIL…ERDK), and 241–274 (PEAK…AVEM). A coiled-coil region spans residues 142–166 (KKSGRIEEEAVLLEHKLQTLEQGMG). The interval 309–329 (TANKNYSDVSSSPASVRPNSA) is disordered. Positions 310 to 326 (ANKNYSDVSSSPASVRP) are enriched in polar residues. The short motif at 377 to 380 (KRKK) is the Nuclear localization signal 2 element. Basic and acidic residues predominate over residues 393–408 (VKDTADGPKSESKKSW). Residues 393 to 434 (VKDTADGPKSESKKSWADIAEEEEAEEEEEERLQGELKTAEM) form a disordered region. Residues 408–434 (WADIAEEEEAEEEEEERLQGELKTAEM) adopt a coiled-coil conformation. A compositionally biased stretch (acidic residues) spans 411-423 (IAEEEEAEEEEEE). A compositionally biased stretch (basic and acidic residues) spans 424 to 434 (RLQGELKTAEM).

Belongs to the MS5 protein family. As to expression, expressed at low levels mostly in floral organs during meiosis. Also barely detectable in leaves, stems and roots.

The protein resides in the nucleus. Essential for male fertility, especially for microspore and pollen grain production. Involved in the regulation of cell division after male meiosis I and II to facilitate exit from meiosis and transition to G1. In Arabidopsis thaliana (Mouse-ear cress), this protein is Protein POLLENLESS 3.